The sequence spans 781 residues: Potassium transporter 5 (781 aa).

Residues 1–11 (MTEPLHTSSNG) show a composition bias toward polar residues. The interval 1-24 (MTEPLHTSSNGGAERGPNAAFESE) is disordered. Residues 1–63 (MTEPLHTSSN…AKVGWATTLH (63 aa)) are Cytoplasmic-facing. A helical membrane pass occupies residues 64–84 (LAFQSIGVVYGDMGTSPLYVF). The Extracellular segment spans residues 85-100 (SSTFTNGIKDTNDILG). A helical transmembrane segment spans residues 101-121 (VMSLIIYTVVLLPLIKYCFIV). At 122–187 (LRANDNGDGG…EKMENSPNFK (66 aa)) the chain is on the cytoplasmic side. The chain crosses the membrane as a helical span at residues 188 to 208 (IILFLVTILATSMVIGDGVLT). At 209–225 (PCISVLSAVGGIKESAK) the chain is on the extracellular side. A helical transmembrane segment spans residues 226–246 (SLTQGQIAGIAIAILIVLFLV). Residues 247-257 (QRFGTDKVGYS) are Cytoplasmic-facing. Residues 258-278 (FGPIILTWFIFIAGTGVYNLF) traverse the membrane as a helical segment. The Extracellular portion of the chain corresponds to 279–304 (KHDTGVLKAFNPKYIVDYFERNGKQG). A helical transmembrane segment spans residues 305–325 (WISLGGVILCITGTEAMFADL). Over 326 to 334 (GHFNVRAIQ) the chain is Cytoplasmic. A helical membrane pass occupies residues 335 to 355 (IGFSVVLLPSVLLAYIGQAAY). The Extracellular portion of the chain corresponds to 356–381 (LRIYPEHVADTFYKSIPDPLYWPTFV). The chain crosses the membrane as a helical span at residues 382-402 (VAVAAAIIASQAMISGAFAII). The Cytoplasmic segment spans residues 403–426 (AQSQILGCFPRVRVIHTSTKFHGQ). A helical membrane pass occupies residues 427–447 (VYIPEINYVLMVLCVAVTAIF). At 448–458 (QTTDKIGNAYG) the chain is on the extracellular side. A helical membrane pass occupies residues 459-479 (IAVVFVMFITTLLVTLVMVMI). Topologically, residues 480 to 481 (WK) are cytoplasmic. A helical transmembrane segment spans residues 482-502 (TSLLWIALFPVIFGGAELIYL). The Extracellular segment spans residues 503–512 (SSAFYKFTQG). The helical transmembrane segment at 513 to 533 (GYLPLVFSAILMFIMATWHYV) threads the bilayer. At 534-781 (HVHRYKYELR…LLRVGMTYEI (248 aa)) the chain is on the cytoplasmic side. Residues 681-707 (VTDPTSEVQDAMSSRNNSDQHTTEPRN) form a disordered region. Residues 683 to 700 (DPTSEVQDAMSSRNNSDQ) are compositionally biased toward polar residues.

Belongs to the HAK/KUP transporter (TC 2.A.72.3) family. In terms of tissue distribution, expressed in root epidermis, parenchyma of stele tissue and primordial of the lateral root, root-shoot junctions and leaf sheaths. Expressed in germinated embryonic tissue, young tillers, flower organs and pedicels.

The protein resides in the cell membrane. The catalysed reaction is K(+)(in) = K(+)(out). Its function is as follows. High-affinity potassium transporter. Its potassium transporter activity does not seem to be affected by high sodium and low potassium concentrations in the extracellular environment. Invloved in salt stress tolerance by enhancing root potassium uptake and translocation to the shoot to prevent sodium influx during salt stress. Involved in the positive regulation of disease resistance against the rice grassy stunt virus by promoting potassium transport and increasing endogenous plant potassium. This is Potassium transporter 5 (HAK5) from Oryza sativa subsp. japonica (Rice).